The chain runs to 62 residues: Large ribosomal subunit protein bL32 (62 aa).

The segment covering 1-19 has biased composition (basic residues); the sequence is MAVPKRKTSKTRRDKRRAS. Positions 1–20 are disordered; that stretch reads MAVPKRKTSKTRRDKRRASS.

Belongs to the bacterial ribosomal protein bL32 family.

The sequence is that of Large ribosomal subunit protein bL32 from Finegoldia magna (strain ATCC 29328 / DSM 20472 / WAL 2508) (Peptostreptococcus magnus).